The following is a 1415-amino-acid chain: DNA-directed RNA polymerase subunit beta' (1415 aa).

Positions 72, 74, 87, and 90 each coordinate Zn(2+). The Mg(2+) site is built by D463, D465, and D467. Zn(2+) is bound by residues C811, C885, C892, and C895.

The protein belongs to the RNA polymerase beta' chain family. The RNAP catalytic core consists of 2 alpha, 1 beta, 1 beta' and 1 omega subunit. When a sigma factor is associated with the core the holoenzyme is formed, which can initiate transcription. The cofactor is Mg(2+). Zn(2+) serves as cofactor.

It carries out the reaction RNA(n) + a ribonucleoside 5'-triphosphate = RNA(n+1) + diphosphate. In terms of biological role, DNA-dependent RNA polymerase catalyzes the transcription of DNA into RNA using the four ribonucleoside triphosphates as substrates. This is DNA-directed RNA polymerase subunit beta' from Cereibacter sphaeroides (strain ATCC 17029 / ATH 2.4.9) (Rhodobacter sphaeroides).